Reading from the N-terminus, the 85-residue chain is MAHKKGVGSSRNGRDSNPKYLGVKLFGGQAIEAGNIIIRQRGTQFHAGDGVGLGRDHTLFALVDGTVAFSIKGPKKRRTVNVIPA.

The protein belongs to the bacterial ribosomal protein bL27 family.

This Xylella fastidiosa (strain 9a5c) protein is Large ribosomal subunit protein bL27.